The primary structure comprises 459 residues: tRNA modification GTPase MnmE (459 aa).

Positions 24, 82, and 122 each coordinate (6S)-5-formyl-5,6,7,8-tetrahydrofolate. The region spanning 219–379 (GIKVVISGAP…LRQHLYFSFK (161 aa)) is the TrmE-type G domain. GTP is bound by residues 229-234 (NSGKSS), 248-254 (TNFPGTT), and 273-276 (DTAG). 2 residues coordinate Mg(2+): S233 and T254. Position 459 (K459) interacts with (6S)-5-formyl-5,6,7,8-tetrahydrofolate.

This sequence belongs to the TRAFAC class TrmE-Era-EngA-EngB-Septin-like GTPase superfamily. TrmE GTPase family. In terms of assembly, homodimer. Heterotetramer of two MnmE and two MnmG subunits. Requires K(+) as cofactor.

The protein resides in the cytoplasm. Its function is as follows. Exhibits a very high intrinsic GTPase hydrolysis rate. Involved in the addition of a carboxymethylaminomethyl (cmnm) group at the wobble position (U34) of certain tRNAs, forming tRNA-cmnm(5)s(2)U34. This Buchnera aphidicola subsp. Baizongia pistaciae (strain Bp) protein is tRNA modification GTPase MnmE.